The chain runs to 558 residues: Acid-sensing ion channel 4-B (558 aa).

Residues 1–71 lie on the Cytoplasmic side of the membrane; that stretch reads MPIEFVCKIK…TSERLGFRQT (71 aa). Residues 72 to 92 form a helical membrane-spanning segment; it reads LWGLALLVSLGLFLYQATWSA. Residues 93–433 are Extracellular-facing; it reads ATYLERPHLA…ETIEQKKAYD (341 aa). Disulfide bonds link Cys120-Cys204 and Cys182-Cys189. N-linked (GlcNAc...) asparagine glycans are attached at residues Asn140, Asn183, Asn188, Asn210, and Asn245. Intrachain disulfides connect Cys298–Cys373, Cys317–Cys369, Cys321–Cys367, Cys330–Cys351, and Cys332–Cys344. A glycan (N-linked (GlcNAc...) asparagine) is linked at Asn374. A helical membrane pass occupies residues 434-454; it reads IAGLLGDIGGQMGLFIGASIL. Residues 450–452 carry the GAS motif; ion selectivity filter motif; the sequence is GAS. Residues 455–558 lie on the Cytoplasmic side of the membrane; the sequence is TILEILDYIY…QQAVQQDFAC (104 aa).

This sequence belongs to the amiloride-sensitive sodium channel (TC 1.A.6) family. ASIC4 subfamily. As to quaternary structure, homotrimer. Heterotrimer; with other ASIC proteins producing functional channels. Expressed in central nervous system.

It is found in the cell membrane. The catalysed reaction is Na(+)(in) = Na(+)(out). Its function is as follows. Does not exhibit measurable stand-alone pH-gated sodium channel activity but may form pH-gated heterotrimeric sodium channels. The polypeptide is Acid-sensing ion channel 4-B (Danio rerio (Zebrafish)).